The following is a 267-amino-acid chain: NADP-dependent mannitol dehydrogenase (267 aa).

NADP(+) contacts are provided by Asn108 and Lys141. Residue Ser160 is the Proton donor of the active site. Tyr175, Lys179, Ile207, and Thr209 together coordinate NADP(+). The active-site Proton acceptor is the Tyr175. The Lowers pKa of active site Tyr role is filled by Lys179.

This sequence belongs to the short-chain dehydrogenases/reductases (SDR) family. In terms of assembly, exists as monomer, dimer and tetramer.

It catalyses the reaction D-mannitol + NADP(+) = D-fructose + NADPH + H(+). Interconverts D-mannitol and D-fructose. Not active with fructose 6-phosphate or NADH. The chain is NADP-dependent mannitol dehydrogenase from Davidiella tassiana (Mycosphaerella tassiana).